Reading from the N-terminus, the 21-residue chain is Glucose-1-phosphate adenylyltransferase large subunit (21 aa).

A disordered region spans residues 1–21 (SVTADNASETKVREIGQEKSS). Positions 8-21 (SETKVREIGQEKSS) are enriched in basic and acidic residues.

The protein belongs to the bacterial/plant glucose-1-phosphate adenylyltransferase family. In terms of assembly, heterotetramer.

The protein resides in the plastid. It is found in the chloroplast. It localises to the amyloplast. The enzyme catalyses alpha-D-glucose 1-phosphate + ATP + H(+) = ADP-alpha-D-glucose + diphosphate. Its pathway is glycan biosynthesis; starch biosynthesis. Its activity is regulated as follows. Activated by 3'phosphoglycerate, inhibited by orthophosphate. Allosteric regulation. In terms of biological role, this protein plays a role in synthesis of starch. It catalyzes the synthesis of the activated glycosyl donor, ADP-glucose from Glc-1-P and ATP. In Spinacia oleracea (Spinach), this protein is Glucose-1-phosphate adenylyltransferase large subunit.